A 361-amino-acid polypeptide reads, in one-letter code: Histidinol-phosphate aminotransferase (361 aa).

Lysine 219 is subject to N6-(pyridoxal phosphate)lysine.

Belongs to the class-II pyridoxal-phosphate-dependent aminotransferase family. Histidinol-phosphate aminotransferase subfamily. Homodimer. It depends on pyridoxal 5'-phosphate as a cofactor.

The catalysed reaction is L-histidinol phosphate + 2-oxoglutarate = 3-(imidazol-4-yl)-2-oxopropyl phosphate + L-glutamate. It functions in the pathway amino-acid biosynthesis; L-histidine biosynthesis; L-histidine from 5-phospho-alpha-D-ribose 1-diphosphate: step 7/9. In Cereibacter sphaeroides (strain ATCC 17023 / DSM 158 / JCM 6121 / CCUG 31486 / LMG 2827 / NBRC 12203 / NCIMB 8253 / ATH 2.4.1.) (Rhodobacter sphaeroides), this protein is Histidinol-phosphate aminotransferase.